The primary structure comprises 175 residues: Pituitary adenylate cyclase-activating polypeptide (175 aa).

The N-terminal stretch at 1 to 24 (MTMCSGARLALLVYGIIMHSSVSC) is a signal peptide. A propeptide spanning residues 25-78 (SPAAGLSFPGIRPEDEAYDQDGNPLQDFYDWDPPGVGSPASALRDAYALYYPAD) is cleaved from the precursor. Residues 149–157 (VKKYLAAVL) are important for receptor binding. Residue L157 is modified to Leucine amide. Position 168 is a lysine amide (K168). Positions 172–175 (IAYL) are excised as a propeptide.

This sequence belongs to the glucagon family.

Its subcellular location is the secreted. In terms of biological role, PACAP is a neuropeptide involved in diverse array of physiological processes through activating the PACAP subfamily of class B1 G protein-coupled receptors: VIP receptor 1 (VIPR1), VIP receptor 2 (VIPR2), and PACAP type I receptor (ADCYAP1R1). Exerts neuroprotective and general cytoprotective effects due to anti-apoptotic, anti-inflammatory, and antioxidant actions. Promotes neuron projection development through the RAPGEF2/Rap1/B-Raf/ERK pathway. In chromaffin cells, induces long-lasting increase of intracellular calcium concentrations and neuroendocrine secretion. Involved in the control of glucose homeostasis, induces insulin secretion by pancreatic beta cells. PACAP exists in two bioactive forms from proteolysis of the same precursor protein, PACAP27 and PACAP38, which differ by eleven amino acid residues in the C-terminus. The chain is Pituitary adenylate cyclase-activating polypeptide from Mus musculus (Mouse).